The chain runs to 540 residues: CBL-interacting protein kinase 12 (540 aa).

Residues 1–23 (MLMATVSPARREPTPQAVRASPM) are disordered. The Protein kinase domain occupies 46 to 300 (YELGRVLGQG…VPEIIESDWF (255 aa)). ATP is bound by residues 52 to 60 (LGQGSFAKV) and Lys-75. Asp-168 functions as the Proton acceptor in the catalytic mechanism. Positions 186-215 (DFGLAAGPDQFDPDGLLHTFCGTPAYVAPE) are activation loop. Over residues 333 to 348 (PPPLGLAPPVPPPPQG) the composition is skewed to pro residues. Residues 333–380 (PPPLGLAPPVPPPPQGDDPDGSGSESDSSVVSCPATLSTGESQRVRGS) are disordered. The segment covering 353–364 (GSGSESDSSVVS) has biased composition (low complexity). One can recognise an NAF domain in the interval 370–406 (STGESQRVRGSLPRPASLNAFDIISFSKGFNLSGLFE). The segment at 409-438 (GNEIRFVSGEPMSDIVKKLEEIAKVKSFTV) is PPI.

The protein belongs to the protein kinase superfamily. CAMK Ser/Thr protein kinase family. SNF1 subfamily. It depends on Mg(2+) as a cofactor. Autophosphorylated. In terms of tissue distribution, expressed at low levels in leaf blades.

It carries out the reaction L-seryl-[protein] + ATP = O-phospho-L-seryl-[protein] + ADP + H(+). The enzyme catalyses L-threonyl-[protein] + ATP = O-phospho-L-threonyl-[protein] + ADP + H(+). Its function is as follows. Involved in drought stress tolerance. CIPK serine-threonine protein kinases interact with CBL proteins. Binding of a CBL protein to the regulatory NAF domain of CIPK protein lead to the activation of the kinase in a calcium-dependent manner. In Oryza sativa subsp. japonica (Rice), this protein is CBL-interacting protein kinase 12 (CIPK12).